Reading from the N-terminus, the 188-residue chain is Transmembrane protein 160 (188 aa).

The transit peptide at 1–96 (MGGGWWWARV…ISFMQSDMGR (96 aa)) directs the protein to the mitochondrion. The tract at residues 21–53 (SLQPPQRPRSGGARGSFAPGHGPRAGASPPPVS) is disordered. S48 bears the Phosphoserine mark. A run of 2 helical transmembrane segments spans residues 102-122 (FFLL…VGLA) and 135-155 (AAAG…AVGL). Residues 168–188 (PEDDGAASTEGPDEAGRPPPE) are disordered.

Belongs to the TMEM160 family. As to expression, expressed in peripheral sensory neurons of dorsal root ganglia (DRG).

The protein localises to the mitochondrion inner membrane. This Mus musculus (Mouse) protein is Transmembrane protein 160.